An 831-amino-acid polypeptide reads, in one-letter code: Translation initiation factor IF-2 (831 aa).

The span at 1–11 (MADEIKKENAP) shows a compositional bias: basic and acidic residues. A disordered region spans residues 1 to 236 (MADEIKKENA…GKHAKKASAL (236 aa)). Residues 22–31 (TTVSGTSTTG) are compositionally biased toward low complexity. Composition is skewed to basic and acidic residues over residues 49 to 150 (DLER…RYAD) and 157 to 166 (DNGKLDDYSD). A compositionally biased stretch (basic residues) spans 190-200 (RSKNKVVKAKK). Basic and acidic residues predominate over residues 201–225 (GGRDDENGNKNERQSDRRNQKDVKG). Residues 330–500 (HRAPVVTIMG…LLQSEVLELT (171 aa)) enclose the tr-type G domain. The segment at 339-346 (GHVDHGKT) is G1. 339 to 346 (GHVDHGKT) serves as a coordination point for GTP. Residues 364-368 (GITQH) form a G2 region. The segment at 386–389 (DTPG) is G3. GTP contacts are provided by residues 386 to 390 (DTPGH) and 440 to 443 (NKID). The tract at residues 440–443 (NKID) is G4. The segment at 476–478 (SAK) is G5.

This sequence belongs to the TRAFAC class translation factor GTPase superfamily. Classic translation factor GTPase family. IF-2 subfamily.

The protein resides in the cytoplasm. One of the essential components for the initiation of protein synthesis. Protects formylmethionyl-tRNA from spontaneous hydrolysis and promotes its binding to the 30S ribosomal subunits. Also involved in the hydrolysis of GTP during the formation of the 70S ribosomal complex. The chain is Translation initiation factor IF-2 from Histophilus somni (strain 2336) (Haemophilus somnus).